Consider the following 818-residue polypeptide: Sorting nexin-29 (818 aa).

The region spanning 36–180 is the RUN domain; it reads SDSDSRVTCL…ILFAINIDNK (145 aa). The tract at residues 267–299 is disordered; the sequence is VSFDDDEEEQGTGDTLKKMPGTAESSEENSDRS. Ser268, Ser291, Ser292, Ser330, Ser344, Ser447, and Ser452 each carry phosphoserine. 2 disordered regions span residues 343–375 and 441–462; these read KSID…PDRT and RYRE…PSAS. Residues 445–462 are compositionally biased toward low complexity; that stretch reads ASSPGQGSPLSSLLPSAS. The stretch at 467-547 forms a coiled coil; it reads MTVHELRQAI…VLKVQLKKYV (81 aa). Ser642 carries the post-translational modification Phosphoserine. Thr644 carries the phosphothreonine modification. Phosphoserine occurs at positions 645 and 649. Residues 659-782 enclose the PX domain; it reads ALINVWIPSV…PFFVDITPPG (124 aa). Residues 781-818 are disordered; sequence PGEPLNKSSRPKAVSRFPKLSRGHPREVRNVEPQSGDL.

This sequence belongs to the sorting nexin family.

This chain is Sorting nexin-29 (Snx29), found in Mus musculus (Mouse).